A 137-amino-acid polypeptide reads, in one-letter code: BolA-like protein 1 (137 aa).

Residue Ser-81 is modified to Phosphoserine. Residues 114–137 form a disordered region; that stretch reads WGENSQLDTSPPCLGGNKKTLGTP.

Belongs to the BolA/IbaG family. Interacts with GLRX5.

Its subcellular location is the mitochondrion. Its function is as follows. Acts as a mitochondrial iron-sulfur (Fe-S) cluster assembly factor that facilitates (Fe-S) cluster insertion into a subset of mitochondrial proteins. Probably acts together with the monothiol glutaredoxin GLRX5. May protect cells against oxidative stress. The sequence is that of BolA-like protein 1 (BOLA1) from Pongo abelii (Sumatran orangutan).